Here is a 175-residue protein sequence, read N- to C-terminus: ATP synthase subunit delta (175 aa).

Belongs to the ATPase delta chain family. In terms of assembly, F-type ATPases have 2 components, F(1) - the catalytic core - and F(0) - the membrane proton channel. F(1) has five subunits: alpha(3), beta(3), gamma(1), delta(1), epsilon(1). F(0) has three main subunits: a(1), b(2) and c(10-14). The alpha and beta chains form an alternating ring which encloses part of the gamma chain. F(1) is attached to F(0) by a central stalk formed by the gamma and epsilon chains, while a peripheral stalk is formed by the delta and b chains.

The protein resides in the cell inner membrane. F(1)F(0) ATP synthase produces ATP from ADP in the presence of a proton or sodium gradient. F-type ATPases consist of two structural domains, F(1) containing the extramembraneous catalytic core and F(0) containing the membrane proton channel, linked together by a central stalk and a peripheral stalk. During catalysis, ATP synthesis in the catalytic domain of F(1) is coupled via a rotary mechanism of the central stalk subunits to proton translocation. In terms of biological role, this protein is part of the stalk that links CF(0) to CF(1). It either transmits conformational changes from CF(0) to CF(1) or is implicated in proton conduction. The sequence is that of ATP synthase subunit delta from Xylella fastidiosa (strain M23).